Reading from the N-terminus, the 544-residue chain is MSNNGLDVQDKPPAPPMRNTSTMIGAGSKDPGTLNHGSKPLPPNPEEKKKKDRFYRSILAGDKTNKKKEKERPEISLPSDFEHTIHVGFDAVTGEFTGMPEQWARLLQTSNITKSEQKKNPQAVLDVLEFYNSKKTSNSQKYMSFTDKSAEDYNSSNTLNVKTVSETPAVPPVSEDEDDDDDATPPPVIAPRPEHTKSVYTRSVIEPLPVTPTRDVATSPISPTENNTTPPDALTRNTEKQKKKPKMSDEEILEKLRSIVSVGDPKKKYTRFEKIGQGASGTVYTAMDVATGQEVAIKQMNLQQQPKKELIINEILVMRENKNPNIVNYLDSYLVGDELWVVMEYLAGGSLTDVVTETCMDEGQIAAVCRECLQALEFLHSNQVIHRDIKSDNILLGMDGSVKLTDFGFCAQITPEQSKRSTMVGTPYWMAPEVVTRKAYGPKVDIWSLGIMAIEMIEGEPPYLNENPLRALYLIATNGTPELQNPEKLSAIFRDFLNRCLEMDVEKRGSAKELLQHQFLKIAKPLSSLTPLIAAAKEATKNNH.

Positions 1–79 (MSNNGLDVQD…KERPEISLPS (79 aa)) are disordered. An N-acetylserine modification is found at S2. A Phosphoserine; by PKB and autocatalysis modification is found at S21. S57 is modified (phosphoserine; by autocatalysis). Residues 68–79 (KEKERPEISLPS) are compositionally biased toward basic and acidic residues. Residues 70 to 140 (KERPEISLPS…YNSKKTSNSQ (71 aa)) form an autoregulatory region region. Residues 75–88 (ISLPSDFEHTIHVG) enclose the CRIB domain. The GTPase-binding stretch occupies residues 75-105 (ISLPSDFEHTIHVGFDAVTGEFTGMPEQWAR). T84 bears the Phosphothreonine; by OXSR1 mark. S115 is subject to Phosphoserine. 2 positions are modified to phosphotyrosine: Y131 and Y142. 2 positions are modified to phosphoserine; by autocatalysis: S144 and S149. A compositionally biased stretch (polar residues) spans 150-166 (AEDYNSSNTLNVKTVSE). The interval 150 to 195 (AEDYNSSNTLNVKTVSETPAVPPVSEDEDDDDDATPPPVIAPRPEH) is disordered. Residue Y153 is modified to Phosphotyrosine; by JAK2. At S174 the chain carries Phosphoserine. A compositionally biased stretch (acidic residues) spans 174-183 (SEDEDDDDDA). Residue T184 is modified to Phosphothreonine. S198 carries the phosphoserine; by autocatalysis modification. Y200 is modified (phosphotyrosine; by JAK2). S203 carries the phosphoserine; by autocatalysis modification. Positions 209–250 (PVTPTRDVATSPISPTENNTTPPDALTRNTEKQKKKPKMSDE) are disordered. Residues T211 and T218 each carry the phosphothreonine modification. 2 positions are modified to phosphoserine: S219 and S222. Residues 219-230 (SPISPTENNTTP) are compositionally biased toward polar residues. T224, T228, and T229 each carry phosphothreonine. The region spanning 269-520 (YTRFEKIGQG…AKELLQHQFL (252 aa)) is the Protein kinase domain. ATP is bound at residue 275 to 283 (IGQGASGTV). Y284 is modified (phosphotyrosine; by JAK2). Residue K298 coordinates ATP. The active-site Proton acceptor is D388. A Phosphothreonine; by autocatalysis, BRSK2 and PDPK1 modification is found at T422.

Belongs to the protein kinase superfamily. STE Ser/Thr protein kinase family. STE20 subfamily. As to quaternary structure, homodimer in its autoinhibited state. Active as monomer. Interacts with GIT1. Component of cytoplasmic complexes, which also contains PXN, ARHGEF7 and GIT1. Interacts with NISCH. Interacts with DVL1; mediates the formation of a DVL1, MUSK and PAK1 ternary complex involved in AChR clustering. Binds to the caspase-cleaved p110 isoform of CDC2L1 and CDC2L2, p110C, but not the full-length proteins. Interacts with ARHGEF7. Interacts with SCRIB. Interacts with PDPK1. Interacts (via kinase domain) with RAF1. Interacts with NCK1 and NCK2. Interacts with TBCB. Interacts with BRSK2. Interacts tightly with GTP-bound but not GDP-bound CDC42/P21 and RAC1. Interacts with SNAI1. Interacts with CIB1 (via N-terminal region); the interaction is direct, promotes PAK1 activity and occurs in a calcium-dependent manner. Interacts with INPP5K. Interacts with gamma-tubulin. Interacts with RHOU; the interaction promotes PAK1 activation. Requires Mg(2+) as cofactor. Post-translationally, autophosphorylated in trans, meaning that in a dimer, one kinase molecule phosphorylates the other one. Activated by autophosphorylation at Thr-422 in response to a conformation change, triggered by interaction with GTP-bound CDC42 or RAC1. Activated by phosphorylation at Thr-422 by PDPK1. Phosphorylated by JAK2 in response to PRL; this increases PAK1 kinase activity. Phosphorylated at Ser-21 by PKB/AKT; this reduces interaction with NCK1 and association with focal adhesion sites. Activated by phosphorylation at Thr-422 by BRSK2. Upon DNA damage, phosphorylated at Thr-211 and translocates to the nucleoplasm. Phosphorylated at tyrosine residues, which can be enhanced by NTN1. Expressed predominantly in the brain, with higher expression in neuronal groups associated with motor function, and at lower levels in the spleen.

It is found in the cytoplasm. Its subcellular location is the cell junction. It localises to the focal adhesion. The protein resides in the cell projection. The protein localises to the lamellipodium. It is found in the cell membrane. Its subcellular location is the ruffle membrane. It localises to the invadopodium. The protein resides in the nucleus. The protein localises to the nucleoplasm. It is found in the chromosome. Its subcellular location is the cytoskeleton. It localises to the microtubule organizing center. The protein resides in the centrosome. It catalyses the reaction L-seryl-[protein] + ATP = O-phospho-L-seryl-[protein] + ADP + H(+). It carries out the reaction L-threonyl-[protein] + ATP = O-phospho-L-threonyl-[protein] + ADP + H(+). Phosphorylation of Thr-84 by OXSR1 inhibits activation. Activated by binding small G proteins. Binding of GTP-bound CDC42 or RAC1 to the autoregulatory region releases monomers from the autoinhibited dimer, and enables activation by phosphorylation of Thr-422. Protein kinase involved in intracellular signaling pathways downstream of integrins and receptor-type kinases that plays an important role in cytoskeleton dynamics, in cell adhesion, migration, proliferation, apoptosis, mitosis, and in vesicle-mediated transport processes. Can directly phosphorylate BAD and protects cells against apoptosis. Activated by interaction with CDC42 and RAC1. Functions as a GTPase effector that links the Rho-related GTPases CDC42 and RAC1 to the JNK MAP kinase pathway. Phosphorylates and activates MAP2K1, and thereby mediates activation of downstream MAP kinases. Involved in the reorganization of the actin cytoskeleton, actin stress fibers and of focal adhesion complexes. Phosphorylates the tubulin chaperone TBCB and thereby plays a role in the regulation of microtubule biogenesis and organization of the tubulin cytoskeleton. Plays a role in the regulation of insulin secretion in response to elevated glucose levels. Part of a ternary complex that contains PAK1, DVL1 and MUSK that is important for MUSK-dependent regulation of AChR clustering during the formation of the neuromuscular junction (NMJ). Activity is inhibited in cells undergoing apoptosis, potentially due to binding of CDC2L1 and CDC2L2. Phosphorylates MYL9/MLC2. Phosphorylates RAF1 at 'Ser-338' and 'Ser-339' resulting in: activation of RAF1, stimulation of RAF1 translocation to mitochondria, phosphorylation of BAD by RAF1, and RAF1 binding to BCL2. Phosphorylates SNAI1 at 'Ser-246' promoting its transcriptional repressor activity by increasing its accumulation in the nucleus. In podocytes, promotes NR3C2 nuclear localization. Required for atypical chemokine receptor ACKR2-induced phosphorylation of LIMK1 and cofilin (CFL1) and for the up-regulation of ACKR2 from endosomal compartment to cell membrane, increasing its efficiency in chemokine uptake and degradation. In synapses, seems to mediate the regulation of F-actin cluster formation performed by SHANK3, maybe through CFL1 phosphorylation and inactivation. Plays a role in RUFY3-mediated facilitating gastric cancer cells migration and invasion. In response to DNA damage, phosphorylates MORC2 which activates its ATPase activity and facilitates chromatin remodeling. In neurons, plays a crucial role in regulating GABA(A) receptor synaptic stability and hence GABAergic inhibitory synaptic transmission through its role in F-actin stabilization. In hippocampal neurons, necessary for the formation of dendritic spines and excitatory synapses; this function is dependent on kinase activity and may be exerted by the regulation of actomyosin contractility through the phosphorylation of myosin II regulatory light chain (MLC). Along with GIT1, positively regulates microtubule nucleation during interphase. Phosphorylates FXR1, promoting its localization to stress granules and activity. Phosphorylates ILK on 'Thr-173' and 'Ser-246', promoting nuclear export of ILK. The sequence is that of Serine/threonine-protein kinase PAK 1 from Rattus norvegicus (Rat).